Reading from the N-terminus, the 218-residue chain is Albicidin resistance protein (218 aa).

It localises to the periplasm. Functionally, albicidin resistance protein binds to form a complex without antibiotic activity but without catalyzing any further chemical modifications to albicidin. In Klebsiella oxytoca, this protein is Albicidin resistance protein.